We begin with the raw amino-acid sequence, 217 residues long: 3-isopropylmalate dehydratase small subunit (217 aa).

This sequence belongs to the LeuD family. LeuD type 1 subfamily. Heterodimer of LeuC and LeuD.

It carries out the reaction (2R,3S)-3-isopropylmalate = (2S)-2-isopropylmalate. It functions in the pathway amino-acid biosynthesis; L-leucine biosynthesis; L-leucine from 3-methyl-2-oxobutanoate: step 2/4. Catalyzes the isomerization between 2-isopropylmalate and 3-isopropylmalate, via the formation of 2-isopropylmaleate. This Paraburkholderia phymatum (strain DSM 17167 / CIP 108236 / LMG 21445 / STM815) (Burkholderia phymatum) protein is 3-isopropylmalate dehydratase small subunit.